The sequence spans 98 residues: Large ribosomal subunit protein uL23 (98 aa).

Belongs to the universal ribosomal protein uL23 family. Part of the 50S ribosomal subunit. Contacts protein L29, and trigger factor when it is bound to the ribosome.

One of the early assembly proteins it binds 23S rRNA. One of the proteins that surrounds the polypeptide exit tunnel on the outside of the ribosome. Forms the main docking site for trigger factor binding to the ribosome. The protein is Large ribosomal subunit protein uL23 of Cereibacter sphaeroides (strain ATCC 17025 / ATH 2.4.3) (Rhodobacter sphaeroides).